Reading from the N-terminus, the 445-residue chain is Signal recognition particle 54 kDa protein (445 aa).

GTP-binding positions include 102–109 (GVQGSGKT), 184–188 (DTAGR), and 244–247 (TKMD).

The protein belongs to the GTP-binding SRP family. SRP54 subfamily. Part of the signal recognition particle protein translocation system, which is composed of SRP and FtsY. Archaeal SRP consists of a 7S RNA molecule of 300 nucleotides and two protein subunits: SRP54 and SRP19.

Its subcellular location is the cytoplasm. It carries out the reaction GTP + H2O = GDP + phosphate + H(+). In terms of biological role, involved in targeting and insertion of nascent membrane proteins into the cytoplasmic membrane. Binds to the hydrophobic signal sequence of the ribosome-nascent chain (RNC) as it emerges from the ribosomes. The SRP-RNC complex is then targeted to the cytoplasmic membrane where it interacts with the SRP receptor FtsY. The chain is Signal recognition particle 54 kDa protein from Sulfurisphaera tokodaii (strain DSM 16993 / JCM 10545 / NBRC 100140 / 7) (Sulfolobus tokodaii).